The sequence spans 224 residues: Oxalate oxidase GF-2.8 (224 aa).

The first 23 residues, 1–23 (MGYSKTLVAGLFAMLLLAPAVLA), serve as a signal peptide directing secretion. Cys-33 and Cys-49 are joined by a disulfide. The 152-residue stretch at 63-214 (SKLAKAGNTS…ALRVEARVVE (152 aa)) folds into the Cupin type-1 domain. N-linked (GlcNAc...) asparagine glycosylation is found at Asn-70 and Asn-75. Residues His-111, His-113, Glu-118, and His-160 each coordinate Mn(2+).

It belongs to the germin family. Oligomer (believed to be a pentamer but probably hexamer).

Its subcellular location is the secreted. It localises to the extracellular space. The protein localises to the apoplast. The protein resides in the cytoplasm. It is found in the cell wall. It catalyses the reaction oxalate + O2 + 2 H(+) = H2O2 + 2 CO2. Its function is as follows. Produces developmental and stress-related release of hydrogen peroxide in the apoplast. May play an important role in several aspects of plant growth and defense mechanisms. The protein is Oxalate oxidase GF-2.8 of Triticum aestivum (Wheat).